The chain runs to 65 residues: Beta-defensin 106A (65 aa).

The signal sequence occupies residues 1–20 (MRTFLFLFAVLFFLTPAKNA). Disulfide bonds link C26/C53, C33/C47, and C37/C54.

It belongs to the beta-defensin family. Monomer. Interacts with CCR2 (via extracellular N-terminal region); this interaction may preferentially require specific tyrosine sulfation on CCR2.

It localises to the secreted. The protein resides in the membrane. Functionally, has antibacterial activity. Acts as a ligand for C-C chemokine receptor CCR2. The sequence is that of Beta-defensin 106A (DEFB106A) from Gorilla gorilla gorilla (Western lowland gorilla).